We begin with the raw amino-acid sequence, 625 residues long: TORTIFOLIA1-like protein 4 (625 aa).

Positions 1 to 34 (MSVHGRFPASPPISLSPSSSSTSPSSQSPSTPPD) are disordered. The span at 12–29 (PISLSPSSSSTSPSSQSP) shows a compositional bias: low complexity. HEAT repeat units lie at residues 69–106 (DSFSPFLNCIHNTDSSVKSPVRKQCVALLSVLSRYHGD), 110–147 (PHLAKMVSTVIRRLRDPDSSVRSACAVATADMSAHVTR), 149–186 (PFASVAKPLIETLIQEGDSNLQIGAALCLAASVDAATD), 190–227 (EQLRKSLPKIGKLLKSDGFKAKAALLSAVGSIITAGGA), and 230–268 (KPVLDWLVPVLIEFLSSEDWAARKSAAEALGKVATAEDL). Positions 391 to 466 (SVDNKGPHFT…VKNCKDDVEE (76 aa)) are disordered. Basic and acidic residues-rich tracts occupy residues 404–413 (KSSEETEEKA), 420–434 (IIKHTISEKSREDSK), and 455–466 (DSVKNCKDDVEE). S475 carries the phosphoserine modification. Positions 582–625 (GMRESTDTNNGQRGGSVFQKRSRRDQFQDCMHTTLQKPTTRLST) are disordered. Residues 612 to 625 (MHTTLQKPTTRLST) are compositionally biased toward polar residues.

The chain is TORTIFOLIA1-like protein 4 from Arabidopsis thaliana (Mouse-ear cress).